We begin with the raw amino-acid sequence, 346 residues long: Very-long-chain 3-oxoacyl-CoA reductase (346 aa).

The helical transmembrane segment at 19-39 (VLLGALLVGVFKLTVFILSVT) threads the bilayer. Val65, Asp119, Asn146, Tyr220, Lys224, Val253, and Ser255 together coordinate NADP(+). The active-site Proton donor is the Tyr220. The active-site Lowers pKa of active site Tyr is Lys224.

Belongs to the short-chain dehydrogenases/reductases (SDR) family.

The protein resides in the endoplasmic reticulum membrane. The enzyme catalyses a very-long-chain (3R)-3-hydroxyacyl-CoA + NADP(+) = a very-long-chain 3-oxoacyl-CoA + NADPH + H(+). Its pathway is lipid metabolism; fatty acid biosynthesis. In terms of biological role, component of the microsomal membrane bound fatty acid elongation system, which produces the 26-carbon very long-chain fatty acids (VLCFA) from palmitate. Catalyzes the reduction of the 3-ketoacyl-CoA intermediate that is formed in each cycle of fatty acid elongation. VLCFAs serve as precursors for ceramide and sphingolipids. The protein is Very-long-chain 3-oxoacyl-CoA reductase of Scheffersomyces stipitis (strain ATCC 58785 / CBS 6054 / NBRC 10063 / NRRL Y-11545) (Yeast).